We begin with the raw amino-acid sequence, 351 residues long: MKNLTTRQAQILKAIINEYIAYPVPVGSKLLTKKYFKNLSGGTLRNEMAVLEKEGYLKKNHISSGRIPSQLGYQYYVKLLTKNDDKSNLKTRLRAIILQKHKTIDEIIELGVKFINEMVNLPVVLTHFSSDEVLKKIDLIMLDQSCALLLLVSASGNVFKKTISYANQRQFEDIMVCVRIFNDRIIDTRFCDIAQHLDVLKEIIRSKVHEYQYVIDEILFKLFNFEEFQQARKQVYGIHYLAQQPEFANQERLTRILNLLEDTSVWQQMAFMNQNNQTTNITFGDKLGLEGEEVSVASTLINTTNESKHQLAIVGPTRMDYQKVKALLLTLKEEIEEYDKQLHGGKTTSST.

It belongs to the HrcA family.

Functionally, negative regulator of class I heat shock genes (grpE-dnaK-dnaJ and groELS operons). Prevents heat-shock induction of these operons. The polypeptide is Heat-inducible transcription repressor HrcA (Mycoplasma pneumoniae (strain ATCC 29342 / M129 / Subtype 1) (Mycoplasmoides pneumoniae)).